Reading from the N-terminus, the 342-residue chain is N-acetyl-gamma-glutamyl-phosphate reductase (342 aa).

C149 is a catalytic residue.

The protein belongs to the NAGSA dehydrogenase family. Type 1 subfamily.

The protein localises to the cytoplasm. It catalyses the reaction N-acetyl-L-glutamate 5-semialdehyde + phosphate + NADP(+) = N-acetyl-L-glutamyl 5-phosphate + NADPH + H(+). It participates in amino-acid biosynthesis; L-arginine biosynthesis; N(2)-acetyl-L-ornithine from L-glutamate: step 3/4. Its function is as follows. Catalyzes the NADPH-dependent reduction of N-acetyl-5-glutamyl phosphate to yield N-acetyl-L-glutamate 5-semialdehyde. The polypeptide is N-acetyl-gamma-glutamyl-phosphate reductase (Rhodobacter capsulatus (strain ATCC BAA-309 / NBRC 16581 / SB1003)).